Here is a 72-residue protein sequence, read N- to C-terminus: Translation initiation factor IF-1 (72 aa).

In terms of domain architecture, S1-like spans 1–72 (MAKDDVIQMQ…SRARIVFRTK (72 aa)).

The protein belongs to the IF-1 family. Component of the 30S ribosomal translation pre-initiation complex which assembles on the 30S ribosome in the order IF-2 and IF-3, IF-1 and N-formylmethionyl-tRNA(fMet); mRNA recruitment can occur at any time during PIC assembly.

The protein resides in the cytoplasm. In terms of biological role, one of the essential components for the initiation of protein synthesis. Stabilizes the binding of IF-2 and IF-3 on the 30S subunit to which N-formylmethionyl-tRNA(fMet) subsequently binds. Helps modulate mRNA selection, yielding the 30S pre-initiation complex (PIC). Upon addition of the 50S ribosomal subunit IF-1, IF-2 and IF-3 are released leaving the mature 70S translation initiation complex. The protein is Translation initiation factor IF-1 of Herminiimonas arsenicoxydans.